Reading from the N-terminus, the 335-residue chain is Cathepsin B-like cysteine proteinase 4 (335 aa).

The first 15 residues, M1 to G15, serve as a signal peptide directing secretion. A propeptide spanning residues L16–T80 is cleaved from the precursor. 6 disulfides stabilise this stretch: C94–C123, C106–C150, C142–C209, C143–C146, C179–C213, and C187–C199. The active site involves C109. An N-linked (GlcNAc...) asparagine glycan is attached at N193. Catalysis depends on residues H281 and N301.

The protein belongs to the peptidase C1 family.

It is found in the secreted. Its function is as follows. Thiol protease which shows activity against the fluorogenic substrate z-Arg-Arg-AMC. The chain is Cathepsin B-like cysteine proteinase 4 (cpr-4) from Caenorhabditis elegans.